The following is a 705-amino-acid chain: ATP-dependent DNA helicase Q-like 2 (705 aa).

Residues 1–30 (MESEAIQEDLQNLDVELKDVQGQISALIEH) adopt a coiled-coil conformation. Residues 98 to 273 (INAIMTGRDV…IEMLHIPKCV (176 aa)) enclose the Helicase ATP-binding domain. An ATP-binding site is contributed by 111-118 (MAAGGGKS). Residues 217–220 (DEAH) carry the DEAH box motif. Residues 298-450 (VVDEIAEFIR…DIVRYCQSKT (153 aa)) enclose the Helicase C-terminal domain. The HRDC domain maps to 591-670 (SITFSGLELK…MRHEAVSEQL (80 aa)). The tract at residues 668–705 (EQLVEDPTKEETCKSRLRKRAKTQKDVVLVESSGEEEA) is disordered.

Belongs to the helicase family. RecQ subfamily. As to quaternary structure, interacts with WEX. Mg(2+) serves as cofactor. Mn(2+) is required as a cofactor. Expressed in shoots and flowers. Expressed in young leaves, inflorescences, roots, shoot apical meristem, young siliques, and mature green siliques.

Its subcellular location is the nucleus. The catalysed reaction is Couples ATP hydrolysis with the unwinding of duplex DNA by translocating in the 3'-5' direction.. The enzyme catalyses ATP + H2O = ADP + phosphate + H(+). In terms of biological role, 3'-5' DNA helicase that may play a role in the repair of DNA. Its DNA unwinding activity in vitro is dependent on magnesium, and ATP or dATP. Can use GTP/dGTP, CTP/dCTP or UTP/dUTP as nucleotide cofactors. Catalyzes Holliday junction branch migration and replication fork regression. Disrupts D-loop structures. Unwinds G-quadruplex DNA, found in telomeric DNA. The chain is ATP-dependent DNA helicase Q-like 2 from Arabidopsis thaliana (Mouse-ear cress).